Consider the following 430-residue polypeptide: Phosphoribosylamine--glycine ligase (430 aa).

The 208-residue stretch at 109 to 316 folds into the ATP-grasp domain; that stretch reads KDFMARHGIP…LLDLIEAALN (208 aa). 135 to 196 contacts ATP; sequence VRQQGAPIVI…EEYLDGEEAS (62 aa). Glu-286 and Asn-288 together coordinate Mg(2+).

It belongs to the GARS family. Requires Mg(2+) as cofactor. It depends on Mn(2+) as a cofactor.

It carries out the reaction 5-phospho-beta-D-ribosylamine + glycine + ATP = N(1)-(5-phospho-beta-D-ribosyl)glycinamide + ADP + phosphate + H(+). Its pathway is purine metabolism; IMP biosynthesis via de novo pathway; N(1)-(5-phospho-D-ribosyl)glycinamide from 5-phospho-alpha-D-ribose 1-diphosphate: step 2/2. This chain is Phosphoribosylamine--glycine ligase, found in Xylella fastidiosa (strain Temecula1 / ATCC 700964).